The sequence spans 484 residues: MADFVASLNAVLWSTPVIYILLGIGFAFSIMTRFLQVRHLKEMIVQMFKGKSSEAGVSSFQALSIALSGRVGTGNIAGVATAIAFGGPGAVFWMWAIAFIGAASAFVESTLAQIYKVKQDGQYRGGPAYYIEKGLGIKWFAVLFAAAALIAMAFLMPGVQSNSIAAGIQNAFGISPFVTGCGLVLLLGFIIFGGVKRIANAAQMIVPFMAIGYILLSLIIIVMNVSELPAVISLIFKSAFALDSAFGGLIGMAISWGVKRGIYSNEAGQGTGPHPAAAAEVSHPVKQGLVQAFSVYIDTLFVCSATAFMILFTGMYNTQAADGSFIVHQLKGVEAGPGFTQAAIDSVLPGFGAGFVAIALFFFAFTTIMAYYYIAETNIAYLARGRESKWAMLGLKLIILAATFYGTVKTASLAWALGDAGLGIMVWLNVIAIVLLAKPALLALKDYERQKKQGLDPIFDPKALGIKNADFWEKEYTHESERVS.

The next 11 membrane-spanning stretches (helical) occupy residues 11–31 (VLWS…FSIM), 66–88 (ALSG…FGGP), 92–114 (FWMW…LAQI), 139–159 (WFAV…MPGV), 172–192 (FGIS…FIIF), 205–225 (IVPF…VMNV), 238–258 (SAFA…SWGV), 292–312 (AFSV…MILF), 350–370 (GFGA…TIMA), 390–410 (WAML…TVKT), and 416–436 (ALGD…IVLL).

It belongs to the alanine or glycine:cation symporter (AGCS) (TC 2.A.25) family.

The protein localises to the cell membrane. In Bacillus subtilis (strain 168), this protein is Putative sodium/proton-dependent alanine carrier protein YrbD (yrbD).